The following is an 89-amino-acid chain: Small ribosomal subunit protein uS15 (89 aa).

Belongs to the universal ribosomal protein uS15 family. In terms of assembly, part of the 30S ribosomal subunit. Forms a bridge to the 50S subunit in the 70S ribosome, contacting the 23S rRNA.

Functionally, one of the primary rRNA binding proteins, it binds directly to 16S rRNA where it helps nucleate assembly of the platform of the 30S subunit by binding and bridging several RNA helices of the 16S rRNA. Its function is as follows. Forms an intersubunit bridge (bridge B4) with the 23S rRNA of the 50S subunit in the ribosome. This chain is Small ribosomal subunit protein uS15, found in Elusimicrobium minutum (strain Pei191).